Here is a 342-residue protein sequence, read N- to C-terminus: Probable dual-specificity RNA methyltransferase RlmN (342 aa).

Glu91 serves as the catalytic Proton acceptor. The Radical SAM core domain occupies 97-326; the sequence is YKFGNTACVS…CTVRRELGSD (230 aa). Residues Cys104 and Cys331 are joined by a disulfide bond. Residues Cys111, Cys115, and Cys118 each coordinate [4Fe-4S] cluster. Residues 157 to 158, Ser189, 212 to 214, and Asn288 contribute to the S-adenosyl-L-methionine site; these read GE and SLH. The active-site S-methylcysteine intermediate is the Cys331.

This sequence belongs to the radical SAM superfamily. RlmN family. The cofactor is [4Fe-4S] cluster.

The protein resides in the cytoplasm. It catalyses the reaction adenosine(2503) in 23S rRNA + 2 reduced [2Fe-2S]-[ferredoxin] + 2 S-adenosyl-L-methionine = 2-methyladenosine(2503) in 23S rRNA + 5'-deoxyadenosine + L-methionine + 2 oxidized [2Fe-2S]-[ferredoxin] + S-adenosyl-L-homocysteine. The enzyme catalyses adenosine(37) in tRNA + 2 reduced [2Fe-2S]-[ferredoxin] + 2 S-adenosyl-L-methionine = 2-methyladenosine(37) in tRNA + 5'-deoxyadenosine + L-methionine + 2 oxidized [2Fe-2S]-[ferredoxin] + S-adenosyl-L-homocysteine. Specifically methylates position 2 of adenine 2503 in 23S rRNA and position 2 of adenine 37 in tRNAs. The chain is Probable dual-specificity RNA methyltransferase RlmN from Caldanaerobacter subterraneus subsp. tengcongensis (strain DSM 15242 / JCM 11007 / NBRC 100824 / MB4) (Thermoanaerobacter tengcongensis).